Here is a 310-residue protein sequence, read N- to C-terminus: MVKVYAPASSANMSVGFDVLGAAVTPVDGALLGDVVTVEAAETFSLNNLGRFADKLPSEPRENIVYQCWERFCQELGKQIPVAMTLEKNMPIGSGLGSSACSVVAALMAMNEHCGKLLNDTRLLALMGELEGRISGSIHYDNVAPCFLGGMQLMIEENDIISQQVPGFDEWLWVLAYPGIKVSTAEARAILPAQYRRQDCIAHGRHLAGFIHACYSRQPELAAKLMKDVIAEPYRERLLPGFRQARQAVAEIGAVASGISGSGPTLFALCDKPDTAQRVADWLGKNYLQNQEGFVHICRLDTAGARVLEN.

91-101 (PIGSGLGSSAC) is an ATP binding site.

This sequence belongs to the GHMP kinase family. Homoserine kinase subfamily.

The protein resides in the cytoplasm. It carries out the reaction L-homoserine + ATP = O-phospho-L-homoserine + ADP + H(+). The protein operates within amino-acid biosynthesis; L-threonine biosynthesis; L-threonine from L-aspartate: step 4/5. Catalyzes the ATP-dependent phosphorylation of L-homoserine to L-homoserine phosphate. In Escherichia coli O81 (strain ED1a), this protein is Homoserine kinase.